The primary structure comprises 220 residues: Charged multivesicular body protein 2a (220 aa).

2 coiled-coil regions span residues 12–53 (EELL…MAKQ) and 198–219 (EATA…NLRR). The tract at residues 196 to 220 (KGEATAALADADADLEERLNNLRRD) is disordered. An MIT-interacting motif motif is present at residues 208 to 218 (ADLEERLNNLR). The span at 211–220 (EERLNNLRRD) shows a compositional bias: basic and acidic residues.

It belongs to the SNF7 family. As to quaternary structure, probable core component of the endosomal sorting required for transport complex III (ESCRT-III). ESCRT-III components are thought to multimerize to form a flat lattice on the perimeter membrane of the endosome.

It is found in the late endosome membrane. Its subcellular location is the cytoplasm. In terms of biological role, probable core component of the endosomal sorting required for transport complex III (ESCRT-III) which is involved in multivesicular bodies (MVBs) formation and sorting of endosomal cargo proteins into MVBs. MVBs contain intraluminal vesicles (ILVs) that are generated by invagination and scission from the limiting membrane of the endosome and mostly are delivered to lysosomes enabling degradation of membrane proteins, such as stimulated growth factor receptors, lysosomal enzymes and lipids. This chain is Charged multivesicular body protein 2a (chmp2a), found in Xenopus laevis (African clawed frog).